Consider the following 346-residue polypeptide: Ribosomal RNA small subunit methyltransferase H (346 aa).

Residues glycine 46–tyrosine 48, aspartate 63, phenylalanine 90, aspartate 113, and glutamine 120 contribute to the S-adenosyl-L-methionine site. The segment at glycine 270–aspartate 327 is disordered.

Belongs to the methyltransferase superfamily. RsmH family.

The protein resides in the cytoplasm. It carries out the reaction cytidine(1402) in 16S rRNA + S-adenosyl-L-methionine = N(4)-methylcytidine(1402) in 16S rRNA + S-adenosyl-L-homocysteine + H(+). Functionally, specifically methylates the N4 position of cytidine in position 1402 (C1402) of 16S rRNA. The chain is Ribosomal RNA small subunit methyltransferase H from Brucella ovis (strain ATCC 25840 / 63/290 / NCTC 10512).